Consider the following 135-residue polypeptide: Endoribonuclease YbeY (135 aa).

Histidine 102, histidine 106, and histidine 112 together coordinate Zn(2+).

Belongs to the endoribonuclease YbeY family. Requires Zn(2+) as cofactor.

It is found in the cytoplasm. In terms of biological role, single strand-specific metallo-endoribonuclease involved in late-stage 70S ribosome quality control and in maturation of the 3' terminus of the 16S rRNA. This chain is Endoribonuclease YbeY, found in Rubrobacter xylanophilus (strain DSM 9941 / JCM 11954 / NBRC 16129 / PRD-1).